The following is a 176-amino-acid chain: V-type proton ATPase 16 kDa proteolipid subunit (176 aa).

The Lumenal portion of the chain corresponds to 1 to 17 (MSVLLRSVTELCPVYSP). A helical transmembrane segment spans residues 18-38 (FFGSMGITASIVFTVFGGAYG). Topologically, residues 39-62 (TAKSSVGISSVGVMKPEFIMRSLF) are cytoplasmic. A helical membrane pass occupies residues 63–83 (PVVFAGVIGLYGLIVCIVLFI). Residues 84–98 (NVNKSEYSLNRAFLD) are Lumenal-facing. Residues 99-119 (LGAGLTCGLCGLASGMSIGIS) traverse the membrane as a helical segment. Residues 120–136 (GDCGVRGAAQQPKLFVS) are Cytoplasmic-facing. A helical membrane pass occupies residues 137–157 (MLICLIFSEALALYGFIVALI). Topologically, residues 158 to 176 (MAATGDNSCVATASTSSSS) are lumenal.

This sequence belongs to the V-ATPase proteolipid subunit family. V-ATPase is a heteromultimeric enzyme composed of a peripheral catalytic V1 complex (main components: subunits A, B, C, D, E, and F) attached to an integral membrane V0 proton pore complex (main component: the proteolipid protein; which is present as a hexamer that forms the proton-conducting pore).

It localises to the vacuole membrane. In terms of biological role, proton-conducting pore forming subunit of the membrane integral V0 complex of vacuolar ATPase. V-ATPase is responsible for acidifying a variety of intracellular compartments in eukaryotic cells. This is V-type proton ATPase 16 kDa proteolipid subunit (VMA3) from Entamoeba dispar.